The following is a 411-amino-acid chain: Mitotic apparatus protein p62 (411 aa).

Acidic residues-rich tracts occupy residues 134 to 156 (AYEV…EEEE), 183 to 201 (ELDE…EEEI), and 246 to 321 (DDDE…EEDS). The segment at 134-378 (AYEVGDEDLE…KSPSKPKKEE (245 aa)) is disordered. Residues 351–367 (GMKEKKTYSLEDMKQDL) show a composition bias toward basic and acidic residues.

This sequence belongs to the nucleoplasmin family. Phosphorylated by CaM-kinase II in vitro.

Its subcellular location is the nucleus. In terms of biological role, required for mitotic progression. Binds to chromatin. This chain is Mitotic apparatus protein p62, found in Lytechinus pictus (Painted sea urchin).